The sequence spans 144 residues: Large ribosomal subunit protein uL15 (144 aa).

The interval 1 to 57 (MKLNDLSPAPGSRREKHRPGRGIGSGLGKTGGRGHKGQTSRSGGTIAPGFEGGQQPL) is disordered. Residues 21 to 31 (RGIGSGLGKTG) show a composition bias toward gly residues.

Belongs to the universal ribosomal protein uL15 family. As to quaternary structure, part of the 50S ribosomal subunit.

Binds to the 23S rRNA. This is Large ribosomal subunit protein uL15 from Pseudomonas fluorescens (strain ATCC BAA-477 / NRRL B-23932 / Pf-5).